Here is a 37-residue protein sequence, read N- to C-terminus: Large ribosomal subunit protein bL36c (37 aa).

Belongs to the bacterial ribosomal protein bL36 family.

It localises to the plastid. The protein resides in the chloroplast. The protein is Large ribosomal subunit protein bL36c of Gnetum parvifolium (Small-leaved jointfir).